Here is a 220-residue protein sequence, read N- to C-terminus: Response regulator protein TmoT (220 aa).

The Response regulatory domain maps to 21–135 (VIYIVDDDNA…DLLGAIRTAL (115 aa)). A 4-aspartylphosphate modification is found at Asp-70. The HTH luxR-type domain maps to 151-216 (LKASYESLSK…DLVRVTERLK (66 aa)). The segment at residues 175–194 (NKQTALELDISEATVKVHRH) is a DNA-binding region (H-T-H motif).

In terms of processing, phosphorylated by TmoS.

It is found in the cytoplasm. Its function is as follows. Member of the two-component regulatory system TmoS/TmoT involved in the regulation of toluene degradation. Induces expression of tmoX operon. The sequence is that of Response regulator protein TmoT (tmoT) from Ectopseudomonas mendocina (Pseudomonas mendocina).